The primary structure comprises 171 residues: Co-chaperone protein HscB (171 aa).

One can recognise a J domain in the interval 2-74 (DYFTLFGLPA…LTRAEYLLSL (73 aa)).

This sequence belongs to the HscB family. As to quaternary structure, interacts with HscA and stimulates its ATPase activity. Interacts with IscU.

In terms of biological role, co-chaperone involved in the maturation of iron-sulfur cluster-containing proteins. Seems to help targeting proteins to be folded toward HscA. This Salmonella agona (strain SL483) protein is Co-chaperone protein HscB.